The sequence spans 481 residues: UDP-glycosyltransferase 85A2 (481 aa).

Residues S303, 360–362 (CPQ), 377–385 (HCGWNSTLE), and 399–402 (FAEQ) each bind UDP-alpha-D-glucose.

Belongs to the UDP-glycosyltransferase family. As to expression, expressed in roots, shoots, leaves and flowers.

The sequence is that of UDP-glycosyltransferase 85A2 (UGT85A2) from Arabidopsis thaliana (Mouse-ear cress).